Consider the following 209-residue polypeptide: Large ribosomal subunit protein uL4 (209 aa).

The segment at 44 to 77 (QRQGTHKSKERSEVSGSTRKLIRQKGGGGARRGD) is disordered.

This sequence belongs to the universal ribosomal protein uL4 family. In terms of assembly, part of the 50S ribosomal subunit.

Functionally, one of the primary rRNA binding proteins, this protein initially binds near the 5'-end of the 23S rRNA. It is important during the early stages of 50S assembly. It makes multiple contacts with different domains of the 23S rRNA in the assembled 50S subunit and ribosome. In terms of biological role, forms part of the polypeptide exit tunnel. This chain is Large ribosomal subunit protein uL4, found in Parabacteroides distasonis (strain ATCC 8503 / DSM 20701 / CIP 104284 / JCM 5825 / NCTC 11152).